A 90-amino-acid polypeptide reads, in one-letter code: Bombyxin B-9 (90 aa).

An N-terminal signal peptide occupies residues 1-20 (MMKTAVMFILVVVISLTYSS). Disulfide bonds link cysteine 30–cysteine 75, cysteine 42–cysteine 88, and cysteine 74–cysteine 79. The propeptide at 49-64 (GGAQYAPYWQETYLRS) is c peptide like.

Belongs to the insulin family. In terms of assembly, heterodimer of a B chain and an A chain linked by two disulfide bonds.

It localises to the secreted. In terms of biological role, brain peptide responsible for activation of prothoracic glands to produce ecdysone in insects. The sequence is that of Bombyxin B-9 (BBXB9) from Bombyx mori (Silk moth).